A 1319-amino-acid chain; its full sequence is Protein Jumonji (1319 aa).

The segment covering 1-11 (MSKERPKRNII) has biased composition (basic residues). Disordered regions lie at residues 1 to 23 (MSKE…GMPW), 50 to 130 (DGID…PSLP), 173 to 265 (DEED…NTNG), 351 to 382 (YSNN…QSIN), 396 to 478 (HKMT…KALN), 499 to 537 (PIQK…PKRA), and 549 to 599 (QQRA…RSRA). Residues 61-70 (ASLSNGQLNG) are compositionally biased toward polar residues. Basic and acidic residues predominate over residues 74 to 88 (GHKEDGSRSQRKDGG). The short motif at 96–102 (PAKKRPR) is the Nuclear localization signal element. The span at 98 to 107 (KKRPRLHAQR) shows a compositional bias: basic residues. Polar residues predominate over residues 109–121 (FAQSQPNSPSNTP). The span at 173–185 (DEEDLEDEDEIEE) shows a compositional bias: acidic residues. Residues 191-200 (VASTSCQSTP) are compositionally biased toward polar residues. Basic and acidic residues predominate over residues 221–251 (KDKELTPRSKARESSVGRDRSERCDESEISH). Over residues 372–382 (LSHSGKAQSIN) the composition is skewed to polar residues. Residues 413–424 (SAREEEVVDRPV) are compositionally biased toward basic and acidic residues. The segment covering 505–515 (PAPPPSPPAAP) has biased composition (pro residues). Low complexity-rich tracts occupy residues 516–525 (ASPSMPQNPA) and 554–570 (TNPT…ASKS). Positions 583-598 (RLDRDRERERERERSR) are enriched in basic and acidic residues. The region spanning 607 to 648 (VPIFKPSSREFQDPLVYLDSFREQVESCGLCRVLPPTDWRPE) is the JmjN domain. Residues 671 to 779 (WGPNVQKLAC…FLLSYDLLSP (109 aa)) form the ARID domain. Over residues 798-811 (RKRGPLEGHSDNGH) the composition is skewed to basic and acidic residues. Residues 798 to 818 (RKRGPLEGHSDNGHHSLALPR) form a disordered region. The GSGFP motif signature appears at 944 to 948 (GSGFP). Residues 954–1118 (PFSKHGWNLT…LGYEAAKDLK (165 aa)) form the JmjC domain.

This sequence belongs to the JARID2 family. As to quaternary structure, associates with the PRC2 complex.

The protein localises to the nucleus. Its function is as follows. Regulator of histone methyltransferase complexes that plays an essential role in embryonic development. Acts by modulating histone methyltransferase activity and promoting the recruitment of histone methyltransferase complexes to their target genes. Binds DNA and mediates the recruitment of the PRC2 complex to target genes in embryonic stem cells. Does not have histone demethylase activity but regulates activity of various histone methyltransferase complexes. In embryonic stem cells, it associates with the PRC2 complex and inhibits trimethylation of 'Lys-27' of histone H3 (H3K27me3) by the PRC2 complex, thereby playing a key role in differentiation of embryonic stem cells and normal development. The polypeptide is Protein Jumonji (jarid2b) (Danio rerio (Zebrafish)).